A 461-amino-acid chain; its full sequence is Cysteine--tRNA ligase (461 aa).

Residue C29 participates in Zn(2+) binding. Positions 31-41 (MTVYDFCHIGH) match the 'HIGH' region motif. The Zn(2+) site is built by C210, H235, and E239. The 'KMSKS' region signature appears at 267–271 (KMSKS). K270 is an ATP binding site.

This sequence belongs to the class-I aminoacyl-tRNA synthetase family. In terms of assembly, monomer. Zn(2+) serves as cofactor.

It localises to the cytoplasm. It carries out the reaction tRNA(Cys) + L-cysteine + ATP = L-cysteinyl-tRNA(Cys) + AMP + diphosphate. This is Cysteine--tRNA ligase from Azotobacter vinelandii (strain DJ / ATCC BAA-1303).